The following is a 237-amino-acid chain: E3 ubiquitin-protein ligase RNF166 (237 aa).

The RING-type zinc-finger motif lies at 33-73 (CPICLEVYHRPVAIGSCGHTFCGECLQPCLQVPSPLCPLCR). Positions 98, 101, 113, and 117 each coordinate Zn(2+). The C2HC RNF-type zinc-finger motif lies at 98 to 117 (CRGCNKKVTLAKMRVHISSC). The 17-residue stretch at 221–237 (DEEAAFQAALALSLSEN) folds into the UIM domain.

The protein resides in the cytoplasm. It catalyses the reaction S-ubiquitinyl-[E2 ubiquitin-conjugating enzyme]-L-cysteine + [acceptor protein]-L-lysine = [E2 ubiquitin-conjugating enzyme]-L-cysteine + N(6)-ubiquitinyl-[acceptor protein]-L-lysine.. It participates in protein modification; protein ubiquitination. E3 ubiquitin-protein ligase that promotes the ubiquitination of different substrates. In turn, participates in different biological processes including interferon production or autophagy. Plays a role in the activation of RNA virus-induced interferon-beta production by promoting the ubiquitination of TRAF3 and TRAF6. Also plays a role in the early recruitment of autophagy adapters to bacteria. Mediates 'Lys-29' and 'Lys-33'-linked ubiquitination of SQSTM1 leading to xenophagic targeting of bacteria and inhibition of their replication. This Homo sapiens (Human) protein is E3 ubiquitin-protein ligase RNF166 (RNF166).